The sequence spans 204 residues: Large ribosomal subunit protein eL15y (204 aa).

The interval 162-204 (RGLTSEGKKNRGLRGKGHNNHKNRPSRRATWKKNNSISLRRYR) is disordered. Basic residues predominate over residues 171–192 (NRGLRGKGHNNHKNRPSRRATW). Positions 193–204 (KKNNSISLRRYR) are enriched in polar residues.

The protein belongs to the eukaryotic ribosomal protein eL15 family.

In Arabidopsis thaliana (Mouse-ear cress), this protein is Large ribosomal subunit protein eL15y (RPL15B).